A 308-amino-acid chain; its full sequence is MSTWTGKRVAVLYGGRSSEREVSLRTGAACAEALRQKGHDVVLVDVDLEVAARLRAERVEVAFVALHGRWGEDGSIQGLLESMAIPYTGSGVLASAMGMDKTVSKAIFRSLGLAVADYRVFPRAAAGAIGVDDLPFGLPCVVKPAGEGSSVGVHLVNAAAELGPACRDAAGYAGDVIVERYVKGTEVDVAVLEGKALGAIEIVPANAFYDYAAKYTAGTTKYFYPARIPEAHVRAVMEAAEAAHRGIGCSGVTRVDFIVAADGTPYILEVNTLPGMTATSLVPKIAAGLGLSFPDLCDRILDGAALKA.

Residues 105–302 (KAIFRSLGLA…FPDLCDRILD (198 aa)) form the ATP-grasp domain. 133–188 (DLPFGLPCVVKPAGEGSSVGVHLVNAAAELGPACRDAAGYAGDVIVERYVKGTEVD) serves as a coordination point for ATP. Mg(2+) contacts are provided by D256, E269, and N271.

Belongs to the D-alanine--D-alanine ligase family. It depends on Mg(2+) as a cofactor. Mn(2+) is required as a cofactor.

It localises to the cytoplasm. It catalyses the reaction 2 D-alanine + ATP = D-alanyl-D-alanine + ADP + phosphate + H(+). Its pathway is cell wall biogenesis; peptidoglycan biosynthesis. Functionally, cell wall formation. This Anaeromyxobacter dehalogenans (strain 2CP-C) protein is D-alanine--D-alanine ligase.